Consider the following 685-residue polypeptide: Glycine--tRNA ligase beta subunit (685 aa).

It belongs to the class-II aminoacyl-tRNA synthetase family. In terms of assembly, tetramer of two alpha and two beta subunits.

Its subcellular location is the cytoplasm. The catalysed reaction is tRNA(Gly) + glycine + ATP = glycyl-tRNA(Gly) + AMP + diphosphate. This is Glycine--tRNA ligase beta subunit from Leuconostoc mesenteroides subsp. mesenteroides (strain ATCC 8293 / DSM 20343 / BCRC 11652 / CCM 1803 / JCM 6124 / NCDO 523 / NBRC 100496 / NCIMB 8023 / NCTC 12954 / NRRL B-1118 / 37Y).